The primary structure comprises 185 residues: Bcl-2-modifying factor (185 aa).

The interval 1–28 is disordered; the sequence is MEPPQCVEELEDDVFQSEDGEPGTQPGG. Residues 8–21 are compositionally biased toward acidic residues; it reads EELEDDVFQSEDGE. Residues 67–75 are interaction with DLC2; the sequence is DKATQTLSP. A BH3 motif is present at residues 134 to 148; the sequence is IARKLQCIADQFHRL.

Belongs to the Bcl-2 family. Interacts with MCL1, BCL2, BCL2L1/BCL-Xl, BCL2A1 and BCL2L2/BCL-w. Interacts with the myosin V actin motor complex through its binding to DLC2. As to expression, widely expressed with an abundant expression in pancreas, liver kidney and hematopoietic tissues.

Functionally, may play a role in apoptosis. This Mus musculus (Mouse) protein is Bcl-2-modifying factor (Bmf).